The sequence spans 466 residues: ATP synthase subunit beta (466 aa).

155-162 (GGAGVGKT) contacts ATP.

Belongs to the ATPase alpha/beta chains family. In terms of assembly, F-type ATPases have 2 components, CF(1) - the catalytic core - and CF(0) - the membrane proton channel. CF(1) has five subunits: alpha(3), beta(3), gamma(1), delta(1), epsilon(1). CF(0) has three main subunits: a(1), b(2) and c(9-12). The alpha and beta chains form an alternating ring which encloses part of the gamma chain. CF(1) is attached to CF(0) by a central stalk formed by the gamma and epsilon chains, while a peripheral stalk is formed by the delta and b chains.

The protein localises to the cell inner membrane. The enzyme catalyses ATP + H2O + 4 H(+)(in) = ADP + phosphate + 5 H(+)(out). Its function is as follows. Produces ATP from ADP in the presence of a proton gradient across the membrane. The catalytic sites are hosted primarily by the beta subunits. The protein is ATP synthase subunit beta of Bordetella pertussis (strain Tohama I / ATCC BAA-589 / NCTC 13251).